A 151-amino-acid polypeptide reads, in one-letter code: 3-hydroxyacyl-[acyl-carrier-protein] dehydratase FabZ (151 aa).

Residue histidine 54 is part of the active site.

Belongs to the thioester dehydratase family. FabZ subfamily. Oligomer. The N-terminus is blocked.

The protein localises to the cytoplasm. The enzyme catalyses a (3R)-hydroxyacyl-[ACP] = a (2E)-enoyl-[ACP] + H2O. In terms of biological role, involved in unsaturated fatty acids biosynthesis. Catalyzes the dehydration of short chain beta-hydroxyacyl-ACPs and long chain saturated and unsaturated beta-hydroxyacyl-ACPs. The chain is 3-hydroxyacyl-[acyl-carrier-protein] dehydratase FabZ from Escherichia coli (strain SE11).